An 80-amino-acid chain; its full sequence is MKTSGVFLLLSLALFCFFSGVFGQGAQVDCAEFKDPKVYCTRESNPHCGSDGQTYGNKCAFCKAVMKSGGKINLKHRGKC.

A signal peptide spans 1–23 (MKTSGVFLLLSLALFCFFSGVFG). Position 24 is a pyrrolidone carboxylic acid (Q24). The Kazal-like domain occupies 24–80 (QGAQVDCAEFKDPKVYCTRESNPHCGSDGQTYGNKCAFCKAVMKSGGKINLKHRGKC). Intrachain disulfides connect C30-C62, C40-C59, and C48-C80.

In terms of tissue distribution, seminal plasma.

It localises to the secreted. Functionally, serine protease inhibitor selective for kallikreins. Efficiently inhibits KLK4, KLK5, KLK6, KLK7, KLK12, KLK13 and KLK14. Doesn't inhibit KLK8. Inhibits acrosin, trypsin, and chymotrypsin. The polypeptide is Serine protease inhibitor Kazal-type 6 (SPINK6) (Bos taurus (Bovine)).